We begin with the raw amino-acid sequence, 307 residues long: Cytidine deaminase 7 (307 aa).

CMP/dCMP-type deaminase domains are found at residues 22-155 and 185-307; these read TEPI…FTPD and SDCS…FITE. A substrate-binding site is contributed by 63-65; it reads NVE. A Zn(2+)-binding site is contributed by His-76. Glu-78 functions as the Proton donor in the catalytic mechanism. Positions 111 and 114 each coordinate Zn(2+).

This sequence belongs to the cytidine and deoxycytidylate deaminase family. As to quaternary structure, homodimer. Zn(2+) serves as cofactor.

It carries out the reaction cytidine + H2O + H(+) = uridine + NH4(+). It catalyses the reaction 2'-deoxycytidine + H2O + H(+) = 2'-deoxyuridine + NH4(+). Its function is as follows. This enzyme scavenges exogenous and endogenous cytidine and 2'-deoxycytidine for UMP synthesis. The sequence is that of Cytidine deaminase 7 (CDA7) from Arabidopsis thaliana (Mouse-ear cress).